We begin with the raw amino-acid sequence, 64 residues long: LTCNTCAFKTCANSETCAAGKNICYQRKWNEHHGERIERKCVANCPELGSHDTSLLCCRIPDCN.

5 disulfide bridges follow: Cys3–Cys24, Cys6–Cys11, Cys17–Cys41, Cys45–Cys57, and Cys58–Cys63.

As to expression, expressed by the venom gland.

The protein localises to the secreted. In terms of biological role, produces peripheral paralysis by blocking neuromuscular transmission at the postsynaptic site. Binds to the muscular nicotinic acetylcholine receptor (nAChR). The chain is Frontoxin V from Micrurus frontalis (Coral snake).